The primary structure comprises 646 residues: MRAPGAGTASVASLALLWFLGLPWTWSAAAAFCVYVGGGGWRFLRIVCKTARRDLFGLSVLIRVRLELRRHRRAGDTIPCIFQAVARRQPERLALVDASSGICWTFAQLDTYSNAVANLFRQLGFAPGDVVAVFLEGRPEFVGLWLGLAKAGVVAALLNVNLRREPLAFCLGTSAAKALIYGGEMAAAVAEVSEQLGKSLLKFCSGDLGPESILPDTQLLDPMLAEAPTTPLAQAPGKGMDDRLFYIYTSGTTGLPKAAIVVHSRYYRIAAFGHHSYSMRAADVLYDCLPLYHSAGNIMGVGQCVIYGLTVVLRKKFSASRFWDDCVKYNCTVVQYIGEICRYLLRQPVRDVEQRHRVRLAVGNGLRPAIWEEFTQRFGVPQIGEFYGATECNCSIANMDGKVGSCGFNSRILTHVYPIRLVKVNEDTMEPLRDSEGLCIPCQPGEPGLLVGQINQQDPLRRFDGYVSDSATNKKIAHSVFRKGDSAYLSGDVLVMDELGYMYFRDRSGDTFRWRGENVSTTEVEAVLSRLLGQTDVAVYGVAVPGVEGKAGMAAIADPHSQLDPNSMYQELQKVLASYARPIFLRLLPQVDTTGTFKIQKTRLQREGFDPRQTSDRLFFLDLKQGRYVPLDERVHARICAGDFSL.

Topologically, residues 1–13 are extracellular; the sequence is MRAPGAGTASVAS. Residues 14–34 form a helical membrane-spanning segment; that stretch reads LALLWFLGLPWTWSAAAAFCV. Residues 35-646 are Cytoplasmic-facing; sequence YVGGGGWRFL…ARICAGDFSL (612 aa). A sufficient for oligomerization region spans residues 191–475; the sequence is EVSEQLGKSL…YVSDSATNKK (285 aa). An AMP-binding site is contributed by 246-257; that stretch reads YIYTSGTTGLPK.

It belongs to the ATP-dependent AMP-binding enzyme family. In terms of assembly, self-associates. May function as a homodimer. Interacts with EPRS1; mediates the translocation of SLC27A1 from the cytoplasm to the plasma membrane thereby increasing the uptake of long-chain fatty acids. Interacts with DGAT2 and this interaction is enhanced in the presence of ZFYVE1. Higher expression in white adipose tissue than in heart. Highest expression in skeletal muscle, heart and fat. Lower levels in brain, kidney, lung, liver and testis. No expression in spleen or intestine.

It is found in the cell membrane. The protein resides in the mitochondrion outer membrane. The protein localises to the endomembrane system. Its subcellular location is the cytoplasm. It carries out the reaction a fatty acid(in) = a fatty acid(out). It catalyses the reaction (9Z)-octadecenoate(out) = (9Z)-octadecenoate(in). The catalysed reaction is hexadecanoate(out) = hexadecanoate(in). The enzyme catalyses (5Z,8Z,11Z,14Z)-eicosatetraenoate(out) = (5Z,8Z,11Z,14Z)-eicosatetraenoate(in). It carries out the reaction (9Z,12Z)-octadecadienoate(out) = (9Z,12Z)-octadecadienoate(in). It catalyses the reaction a long-chain fatty acid + ATP + CoA = a long-chain fatty acyl-CoA + AMP + diphosphate. The catalysed reaction is (5Z,8Z,11Z,14Z)-eicosatetraenoate + ATP + CoA = (5Z,8Z,11Z,14Z)-eicosatetraenoyl-CoA + AMP + diphosphate. The enzyme catalyses a very long-chain fatty acid + ATP + CoA = a very long-chain fatty acyl-CoA + AMP + diphosphate. It carries out the reaction tetracosanoate + ATP + CoA = tetracosanoyl-CoA + AMP + diphosphate. Inhibited by Triacsin C. Both insulin and muscle contraction stimulate translocation to the plasma membrane in muscle, increasing fatty acid transport activity. Functionally, mediates the import of long-chain fatty acids (LCFA) into the cell by facilitating their transport at the plasma membrane. Also functions as an acyl-CoA ligase catalyzing the ATP-dependent formation of fatty acyl-CoA using LCFA and very-long-chain fatty acids (VLCFA) as substrates, which prevents fatty acid efflux from cells and might drive more fatty acid uptake. May act directly as a bona fide transporter, or alternatively, in a cytoplasmic or membrane-associated multimeric protein complex to trap and draw fatty acids towards accumulation. Plays a pivotal role in regulating available LCFA substrates from exogenous sources in tissues undergoing high levels of beta-oxidation or triglyceride synthesis. May be involved in regulation of cholesterol metabolism. Probably involved in fatty acid transport across the blood barrier. The polypeptide is Long-chain fatty acid transport protein 1 (Mus musculus (Mouse)).